The sequence spans 100 residues: MIGLNHYLIVSGLLFCIGLAGMLKRKNILLLFFSTEIMLNAINIGFVAISKYTHNLDGQMFALFIIAIAASEVAIGLGLVILWFKKFKSLDIDSLNAMKG.

The next 3 helical transmembrane spans lie at Met-1 to Gly-21, Ile-28 to Ala-48, and Phe-64 to Phe-84.

Belongs to the complex I subunit 4L family. NDH-1 is composed of 14 different subunits. Subunits NuoA, H, J, K, L, M, N constitute the membrane sector of the complex.

The protein localises to the cell inner membrane. The enzyme catalyses a quinone + NADH + 5 H(+)(in) = a quinol + NAD(+) + 4 H(+)(out). In terms of biological role, NDH-1 shuttles electrons from NADH, via FMN and iron-sulfur (Fe-S) centers, to quinones in the respiratory chain. The immediate electron acceptor for the enzyme in this species is believed to be ubiquinone. Couples the redox reaction to proton translocation (for every two electrons transferred, four hydrogen ions are translocated across the cytoplasmic membrane), and thus conserves the redox energy in a proton gradient. The polypeptide is NADH-quinone oxidoreductase subunit K (Helicobacter pylori (strain Shi470)).